The chain runs to 105 residues: Dicamba O-demethylase, ferredoxin component (105 aa).

A 2Fe-2S ferredoxin-type domain is found at 2 to 105 (PQITVVNQSG…GIKVTIAQED (104 aa)). Residues Cys-40, Cys-46, Cys-49, and Cys-86 each contribute to the [2Fe-2S] cluster site.

The protein belongs to the adrenodoxin/putidaredoxin family. In terms of assembly, monomer. The dicamba O-demethylase multicomponent enzyme system is composed of an oxygenase component (DdmC) and an electron transfer component formed by a ferredoxin reductase (DdmA1) and a ferredoxin (DdmB). In vitro, dicamba O-demethylase assays in which DdmA2 is substituted for DdmA1 demonstrate that the two enzymes possess nearly identical activities. [2Fe-2S] cluster serves as cofactor.

Component of the dicamba O-demethylase multicomponent enzyme system involved in the degradation of the herbicide dicamba. In vitro, functions as an intermediate electron transfer protein. The polypeptide is Dicamba O-demethylase, ferredoxin component (Stenotrophomonas maltophilia (Pseudomonas maltophilia)).